The primary structure comprises 433 residues: Dihydroorotase (433 aa).

Residues His-63 and His-65 each coordinate Zn(2+). Residues 65-67 and Asn-97 each bind substrate; that span reads HLR. Zn(2+)-binding residues include Asp-155, His-182, and His-235. Substrate is bound at residue Asn-283. Asp-310 provides a ligand contact to Zn(2+). Asp-310 is an active-site residue. Substrate is bound at residue His-314.

The protein belongs to the metallo-dependent hydrolases superfamily. DHOase family. Class I DHOase subfamily. It depends on Zn(2+) as a cofactor.

The catalysed reaction is (S)-dihydroorotate + H2O = N-carbamoyl-L-aspartate + H(+). The protein operates within pyrimidine metabolism; UMP biosynthesis via de novo pathway; (S)-dihydroorotate from bicarbonate: step 3/3. Its function is as follows. Catalyzes the reversible cyclization of carbamoyl aspartate to dihydroorotate. This chain is Dihydroorotase, found in Anaeromyxobacter dehalogenans (strain 2CP-1 / ATCC BAA-258).